The primary structure comprises 503 residues: Maturase K (503 aa).

The protein belongs to the intron maturase 2 family. MatK subfamily.

The protein resides in the plastid. It localises to the chloroplast. In terms of biological role, usually encoded in the trnK tRNA gene intron. Probably assists in splicing its own and other chloroplast group II introns. This Stangeria eriopus (Natal grass cycad) protein is Maturase K.